The primary structure comprises 328 residues: D-cysteine desulfhydrase (328 aa).

Position 51 is an N6-(pyridoxal phosphate)lysine (Lys51).

It belongs to the ACC deaminase/D-cysteine desulfhydrase family. As to quaternary structure, homodimer. Pyridoxal 5'-phosphate serves as cofactor.

It catalyses the reaction D-cysteine + H2O = hydrogen sulfide + pyruvate + NH4(+) + H(+). Functionally, catalyzes the alpha,beta-elimination reaction of D-cysteine and of several D-cysteine derivatives. It could be a defense mechanism against D-cysteine. The chain is D-cysteine desulfhydrase from Klebsiella pneumoniae (strain 342).